The chain runs to 70 residues: Small ribosomal subunit protein bS21 (70 aa).

Belongs to the bacterial ribosomal protein bS21 family.

This Methylobacillus flagellatus (strain ATCC 51484 / DSM 6875 / VKM B-1610 / KT) protein is Small ribosomal subunit protein bS21.